Reading from the N-terminus, the 397-residue chain is Acetate kinase 2 (397 aa).

Asparagine 10 lines the Mg(2+) pocket. Lysine 17 contacts ATP. Arginine 90 provides a ligand contact to substrate. Aspartate 147 functions as the Proton donor/acceptor in the catalytic mechanism. Residues 207-211, 281-283, and 329-333 each bind ATP; these read HLGNG, DAR, and GIGEN. Residue glutamate 385 coordinates Mg(2+).

The protein belongs to the acetokinase family. As to quaternary structure, homodimer. It depends on Mg(2+) as a cofactor. Requires Mn(2+) as cofactor.

The protein resides in the cytoplasm. It carries out the reaction acetate + ATP = acetyl phosphate + ADP. It participates in metabolic intermediate biosynthesis; acetyl-CoA biosynthesis; acetyl-CoA from acetate: step 1/2. Its function is as follows. Catalyzes the formation of acetyl phosphate from acetate and ATP. Can also catalyze the reverse reaction. The chain is Acetate kinase 2 from Vibrio cholerae serotype O1 (strain ATCC 39315 / El Tor Inaba N16961).